Here is a 35-residue protein sequence, read N- to C-terminus: TATCAGQDKPCQKHCDCCGPKGECVCEGPCICRQG.

Intrachain disulfides connect Cys4–Cys18, Cys11–Cys24, Cys17–Cys32, and Cys26–Cys30.

In terms of tissue distribution, expressed by the venom gland.

It is found in the secreted. Its function is as follows. Blocks voltage-gated sodium channels (Nav). The chain is U5-ctenitoxin-Co1a from Ctenus ornatus (Brazilian spider).